Consider the following 136-residue polypeptide: Early E3 15.3 kDa protein (136 aa).

The protein belongs to the adenoviridae E3_15 family.

In terms of biological role, protects virus-infected cells from TNF-induced cytolysis. In Human adenovirus B serotype 3 (HAdV-3), this protein is Early E3 15.3 kDa protein.